Consider the following 92-residue polypeptide: Small ribosomal subunit protein uS19c (92 aa).

It belongs to the universal ribosomal protein uS19 family.

Its subcellular location is the plastid. The protein localises to the chloroplast. In terms of biological role, protein S19 forms a complex with S13 that binds strongly to the 16S ribosomal RNA. The chain is Small ribosomal subunit protein uS19c from Nicotiana sylvestris (Wood tobacco).